The following is a 302-amino-acid chain: Acetylglutamate kinase (302 aa).

Residues glycine 75–glycine 76, arginine 97, and asparagine 198 contribute to the substrate site.

This sequence belongs to the acetylglutamate kinase family. ArgB subfamily.

The protein localises to the cytoplasm. The catalysed reaction is N-acetyl-L-glutamate + ATP = N-acetyl-L-glutamyl 5-phosphate + ADP. The protein operates within amino-acid biosynthesis; L-arginine biosynthesis; N(2)-acetyl-L-ornithine from L-glutamate: step 2/4. Catalyzes the ATP-dependent phosphorylation of N-acetyl-L-glutamate. This is Acetylglutamate kinase from Leifsonia xyli subsp. xyli (strain CTCB07).